A 192-amino-acid polypeptide reads, in one-letter code: MLSFLSSNLSNTRQSIAQVLNFALVLSTAFMLWKGLSVVTASSSPIVVVLSGSMEPAFQRGDLLFLWNRSPRAEVGEIVVYNVKGKDIPIVHRVVRTFPEVEGKKEKTVKEVTVSTPTPPNMLLTKGDNNLADDTELYARGQEFLHRKEDIVGSVRGYMPMVGYVTIMLSEHPWLKSVLLGIMGLMVILQRE.

The Cytoplasmic portion of the chain corresponds to methionine 1–glutamine 18. A helical; Signal-anchor for type II membrane protein transmembrane segment spans residues valine 19–valine 39. At threonine 40 to glutamate 192 the chain is on the lumenal side. Active-site charge relay system residues include serine 53, histidine 92, and aspartate 134. Positions valine 178–leucine 189 are C-terminal short (CTS) helix.

It belongs to the peptidase S26B family. As to quaternary structure, component of the signal peptidase complex (SPC) composed of a catalytic subunit SEC11 and three accessory subunits SPC1, SPC2 and SPC3. The complex induces a local thinning of the ER membrane which is used to measure the length of the signal peptide (SP) h-region of protein substrates. This ensures the selectivity of the complex towards h-regions shorter than 18-20 amino acids. SPC associates with the translocon complex.

It localises to the endoplasmic reticulum membrane. It carries out the reaction Cleavage of hydrophobic, N-terminal signal or leader sequences from secreted and periplasmic proteins.. In terms of biological role, catalytic component of the signal peptidase complex (SPC) which catalyzes the cleavage of N-terminal signal sequences from nascent proteins as they are translocated into the lumen of the endoplasmic reticulum. Specifically cleaves N-terminal signal peptides that contain a hydrophobic alpha-helix (h-region) shorter than 18-20 amino acids. The polypeptide is Signal peptidase complex catalytic subunit sec11 (sec11) (Emericella nidulans (strain FGSC A4 / ATCC 38163 / CBS 112.46 / NRRL 194 / M139) (Aspergillus nidulans)).